The following is a 697-amino-acid chain: Heat shock protein homolog SSE1 (697 aa).

Residues 664–674 (EMAEKLAAQRA) show a composition bias toward low complexity. A disordered region spans residues 664–697 (EMAEKLAAQRAAEQKAQESKAESDKDAEGDIDLD). Residues 675–691 (AEQKAQESKAESDKDAE) show a composition bias toward basic and acidic residues.

This sequence belongs to the heat shock protein 70 family.

Its subcellular location is the cytoplasm. The polypeptide is Heat shock protein homolog SSE1 (SSE1) (Eremothecium gossypii (strain ATCC 10895 / CBS 109.51 / FGSC 9923 / NRRL Y-1056) (Yeast)).